The sequence spans 852 residues: Zinc finger and SCAN domain-containing protein 29 (852 aa).

In terms of domain architecture, SCAN box spans 18 to 100 (RQRFRRFHYQ…TLVEDLEREP (83 aa)). 3 disordered regions span residues 96–182 (LERE…PKSG), 347–400 (ASHS…SAAP), and 502–557 (PNDG…RAPV). Residue K112 forms a Glycyl lysine isopeptide (Lys-Gly) (interchain with G-Cter in SUMO2) linkage. S153 is modified (phosphoserine). K180 participates in a covalent cross-link: Glycyl lysine isopeptide (Lys-Gly) (interchain with G-Cter in SUMO2). The span at 508–517 (ETASCPVQGT) shows a compositional bias: polar residues. Acidic residues predominate over residues 528–545 (EADEATEEDSDDDEEDTE). S561 is modified (phosphoserine). Residue K576 forms a Glycyl lysine isopeptide (Lys-Gly) (interchain with G-Cter in SUMO2) linkage. Positions 603–625 (QGKGNESDCRSGRQWAKTSGEKR) are disordered. A Glycyl lysine isopeptide (Lys-Gly) (interchain with G-Cter in SUMO2) cross-link involves residue K652. C2H2-type zinc fingers lie at residues 678–700 (YKCADCGKSFSRSARLIRHRRIH), 706–728 (YKCLDCGKSFRDSSNFITHRRIH), 734–756 (YQCGECGKCFNQSSSLIIHQRTH), 762–784 (YQCEECGKSFNNSSHFSAHRRIH), 790–812 (HVCPDCGKSFSKSSDLRAHHRTH), and 818–840 (YGCHDCGKCFSKSSALNKHGEIH).

Belongs to the krueppel C2H2-type zinc-finger protein family.

The protein localises to the nucleus. Functionally, may be involved in transcriptional regulation. This Homo sapiens (Human) protein is Zinc finger and SCAN domain-containing protein 29 (ZSCAN29).